Here is a 58-residue protein sequence, read N- to C-terminus: U-scoloptoxin(14)-Sa1a (58 aa).

The signal sequence occupies residues 1–18 (MNRILGMIFLFCLISCYA).

The protein belongs to the scoloptoxin-14 family. In terms of processing, contains 4 disulfide bonds. As to expression, expressed by the venom gland.

It is found in the secreted. The chain is U-scoloptoxin(14)-Sa1a from Scolopendra alternans (Florida Keys giant centipede).